We begin with the raw amino-acid sequence, 231 residues long: Large ribosomal subunit protein uL1 (231 aa).

The protein belongs to the universal ribosomal protein uL1 family. Part of the 50S ribosomal subunit.

Functionally, binds directly to 23S rRNA. The L1 stalk is quite mobile in the ribosome, and is involved in E site tRNA release. Its function is as follows. Protein L1 is also a translational repressor protein, it controls the translation of the L11 operon by binding to its mRNA. In Halorhodospira halophila (strain DSM 244 / SL1) (Ectothiorhodospira halophila (strain DSM 244 / SL1)), this protein is Large ribosomal subunit protein uL1.